A 251-amino-acid polypeptide reads, in one-letter code: 1-(5-phosphoribosyl)-5-[(5-phosphoribosylamino)methylideneamino] imidazole-4-carboxamide isomerase (251 aa).

Aspartate 8 (proton acceptor) is an active-site residue. Aspartate 131 acts as the Proton donor in catalysis.

The protein belongs to the HisA/HisF family.

Its subcellular location is the cytoplasm. It catalyses the reaction 1-(5-phospho-beta-D-ribosyl)-5-[(5-phospho-beta-D-ribosylamino)methylideneamino]imidazole-4-carboxamide = 5-[(5-phospho-1-deoxy-D-ribulos-1-ylimino)methylamino]-1-(5-phospho-beta-D-ribosyl)imidazole-4-carboxamide. Its pathway is amino-acid biosynthesis; L-histidine biosynthesis; L-histidine from 5-phospho-alpha-D-ribose 1-diphosphate: step 4/9. The polypeptide is 1-(5-phosphoribosyl)-5-[(5-phosphoribosylamino)methylideneamino] imidazole-4-carboxamide isomerase (Thiobacillus denitrificans (strain ATCC 25259 / T1)).